The primary structure comprises 283 residues: Pantothenate synthetase (283 aa).

26-33 (MGNLHAGH) contributes to the ATP binding site. The active-site Proton donor is His33. Gln57 is a binding site for (R)-pantoate. Gln57 contributes to the beta-alanine binding site. Residue 144-147 (GRKD) participates in ATP binding. A (R)-pantoate-binding site is contributed by Gln150. ATP-binding positions include Leu173 and 181-184 (MSSR).

This sequence belongs to the pantothenate synthetase family. As to quaternary structure, homodimer.

Its subcellular location is the cytoplasm. It carries out the reaction (R)-pantoate + beta-alanine + ATP = (R)-pantothenate + AMP + diphosphate + H(+). It participates in cofactor biosynthesis; (R)-pantothenate biosynthesis; (R)-pantothenate from (R)-pantoate and beta-alanine: step 1/1. Its function is as follows. Catalyzes the condensation of pantoate with beta-alanine in an ATP-dependent reaction via a pantoyl-adenylate intermediate. This is Pantothenate synthetase from Thiobacillus denitrificans (strain ATCC 25259 / T1).